The chain runs to 102 residues: Small ribosomal subunit protein uS10 (102 aa).

It belongs to the universal ribosomal protein uS10 family. Part of the 30S ribosomal subunit.

Involved in the binding of tRNA to the ribosomes. The sequence is that of Small ribosomal subunit protein uS10 from Nitrosospira multiformis (strain ATCC 25196 / NCIMB 11849 / C 71).